Consider the following 176-residue polypeptide: Centromere protein R (176 aa).

Lysine 8 is covalently cross-linked (Glycyl lysine isopeptide (Lys-Gly) (interchain with G-Cter in SUMO2)). At serine 17 the chain carries Phosphoserine. Residues 20-50 are DD1; the sequence is PSKIVRKKSITAYSPTTGTYQLSPFSSPATP. A Glycyl lysine isopeptide (Lys-Gly) (interchain with G-Cter in SUMO2) cross-link involves residue lysine 22. Serine 28 bears the Phosphoserine mark. Residues 34-48 show a composition bias toward polar residues; sequence PTTGTYQLSPFSSPA. The segment at 34–78 is disordered; sequence PTTGTYQLSPFSSPATPKEQEHRNGPSNETRKRSNLSSPVRQEST. Over residues 51-65 the composition is skewed to basic and acidic residues; sequence KEQEHRNGPSNETRK. The short motif at 63 to 66 is the Nuclear localization signal element; that stretch reads TRKR. Phosphoserine is present on serine 71. Residues 82–112 adopt a coiled-coil conformation; the sequence is RDGFMVLLSKIEISSEKTMEIMKNLSSIQAL. An LXXIL motif motif is present at residues 171-175; the sequence is LKAIL.

Homodimer; mediated by the coiled coil domain. Interacts with CCNA2 and MTA1. Interacts with NFKB1 NF-kappa-B subunit. Component of the CENPA-CAD complex, composed of CENPI, CENPK, CENPL, CENPO, CENPP, CENPQ, CENPR and CENPS. The CENPA-CAD complex interacts with the CENPA-NAC complex, at least composed of CENPA, CENPC, CENPH, CENPM, CENPN, CENPT and CENPU. Interacts with TASOR. In terms of tissue distribution, expressed in the spermatogonia and spermatocytes.

The protein localises to the nucleus. It is found in the chromosome. Its subcellular location is the centromere. It localises to the kinetochore. Functionally, transcription coregulator that can have both coactivator and corepressor functions. Involved in the coactivation of nuclear receptors for retinoid X (RXRs) and thyroid hormone (TRs) in a ligand-dependent fashion. In contrast, it does not coactivate nuclear receptors for retinoic acid, vitamin D, progesterone receptor, nor glucocorticoid. Acts as a coactivator for estrogen receptor alpha. Acts as a transcriptional corepressor via its interaction with the NFKB1 NF-kappa-B subunit, possibly by interfering with the transactivation domain of NFKB1. Induces apoptosis in breast cancer cells, but not in other cancer cells, via a caspase-2 mediated pathway that involves mitochondrial membrane permeabilization but does not require other caspases. May also act as an inhibitor of cyclin A-associated kinase. Also acts a component of the CENPA-CAD (nucleosome distal) complex, a complex recruited to centromeres which is involved in assembly of kinetochore proteins, mitotic progression and chromosome segregation. May be involved in incorporation of newly synthesized CENPA into centromeres via its interaction with the CENPA-NAC complex. This Mus musculus (Mouse) protein is Centromere protein R (Itgb3bp).